A 253-amino-acid chain; its full sequence is Ubiquinone/menaquinone biosynthesis C-methyltransferase UbiE (253 aa).

Residues T76, D97, 125–126 (NA), and S142 each bind S-adenosyl-L-methionine.

It belongs to the class I-like SAM-binding methyltransferase superfamily. MenG/UbiE family.

The catalysed reaction is a 2-demethylmenaquinol + S-adenosyl-L-methionine = a menaquinol + S-adenosyl-L-homocysteine + H(+). It catalyses the reaction a 2-methoxy-6-(all-trans-polyprenyl)benzene-1,4-diol + S-adenosyl-L-methionine = a 5-methoxy-2-methyl-3-(all-trans-polyprenyl)benzene-1,4-diol + S-adenosyl-L-homocysteine + H(+). It functions in the pathway quinol/quinone metabolism; menaquinone biosynthesis; menaquinol from 1,4-dihydroxy-2-naphthoate: step 2/2. The protein operates within cofactor biosynthesis; ubiquinone biosynthesis. Its function is as follows. Methyltransferase required for the conversion of demethylmenaquinol (DMKH2) to menaquinol (MKH2) and the conversion of 2-polyprenyl-6-methoxy-1,4-benzoquinol (DDMQH2) to 2-polyprenyl-3-methyl-6-methoxy-1,4-benzoquinol (DMQH2). The chain is Ubiquinone/menaquinone biosynthesis C-methyltransferase UbiE from Xylella fastidiosa (strain M12).